A 285-amino-acid chain; its full sequence is Polyamine aminopropyltransferase (285 aa).

The PABS domain maps to 5 to 241 (DNWYIEHFQP…GWWSVTMASK (237 aa)). Gln-35 provides a ligand contact to S-methyl-5'-thioadenosine. Spermidine is bound by residues His-66 and Asp-90. S-methyl-5'-thioadenosine is bound by residues Asp-110 and 141–142 (DG). The active-site Proton acceptor is Asp-160. A spermidine-binding site is contributed by 160–163 (DSTD). Pro-167 contacts S-methyl-5'-thioadenosine.

It belongs to the spermidine/spermine synthase family. As to quaternary structure, homodimer or homotetramer.

Its subcellular location is the cytoplasm. The catalysed reaction is S-adenosyl 3-(methylsulfanyl)propylamine + putrescine = S-methyl-5'-thioadenosine + spermidine + H(+). It participates in amine and polyamine biosynthesis; spermidine biosynthesis; spermidine from putrescine: step 1/1. Functionally, catalyzes the irreversible transfer of a propylamine group from the amino donor S-adenosylmethioninamine (decarboxy-AdoMet) to putrescine (1,4-diaminobutane) to yield spermidine. The sequence is that of Polyamine aminopropyltransferase from Xanthomonas euvesicatoria pv. vesicatoria (strain 85-10) (Xanthomonas campestris pv. vesicatoria).